Here is a 123-residue protein sequence, read N- to C-terminus: Small ribosomal subunit protein uS12cz/uS12cy (123 aa).

This sequence belongs to the universal ribosomal protein uS12 family. As to quaternary structure, part of the 30S ribosomal subunit.

The protein resides in the plastid. The protein localises to the chloroplast. Functionally, with S4 and S5 plays an important role in translational accuracy. Located at the interface of the 30S and 50S subunits. This Cucumis sativus (Cucumber) protein is Small ribosomal subunit protein uS12cz/uS12cy (rps12-A).